The sequence spans 93 residues: Small ribosomal subunit protein uS19 (93 aa).

The protein belongs to the universal ribosomal protein uS19 family.

Its function is as follows. Protein S19 forms a complex with S13 that binds strongly to the 16S ribosomal RNA. The protein is Small ribosomal subunit protein uS19 of Ehrlichia chaffeensis (strain ATCC CRL-10679 / Arkansas).